Here is a 75-residue protein sequence, read N- to C-terminus: Kappa-conotoxin RIIIK (75 aa).

The N-terminal stretch at 1–19 is a signal peptide; that stretch reads MSKLGVLLTICLLLFPLTA. The propeptide occupies 20-50; that stretch reads LPMDGDQPVDRLAERMQDNISSEQHTFFEKR. 4-hydroxyproline occurs at positions 52, 63, 65, and 71. 3 disulfide bridges follow: Cys54–Cys67, Cys55–Cys72, and Cys62–Cys73. A Threonine amide modification is found at Thr74.

It belongs to the conotoxin M superfamily. As to expression, expressed by the venom duct.

It localises to the secreted. In terms of biological role, kappa-conotoxins inhibits voltage-gated potassium channels (Kv). This synthetic toxin reversibly inhibits the insect potassium channel Shaker K+, the teleost homolog TSha1 and the mammalian Kv1.2/KCNA2 channel. Interacts with the pore region of the insect channel, in a state-dependent manner. Causes seizure when intracerebrovascularly injected into mice. Is also toxic when intrathecally injected into mice, but shows no visible effects by intraperitoneal injection. Shows protective effects on cardiac tissue when administered after an ischemic event. The protein is Kappa-conotoxin RIIIK of Conus radiatus (Rayed cone).